Consider the following 156-residue polypeptide: Small ribosomal subunit protein uS7 (156 aa).

Belongs to the universal ribosomal protein uS7 family. Part of the 30S ribosomal subunit. Contacts proteins S9 and S11.

Its function is as follows. One of the primary rRNA binding proteins, it binds directly to 16S rRNA where it nucleates assembly of the head domain of the 30S subunit. Is located at the subunit interface close to the decoding center, probably blocks exit of the E-site tRNA. This Dictyoglomus turgidum (strain DSM 6724 / Z-1310) protein is Small ribosomal subunit protein uS7.